The following is a 323-amino-acid chain: MIDFGNFYAQIAHGPLSKWLEVLPAQLAAWQRDSLHGYFRDWNNAVERLPALTPHRLDLLHGVCAGAETPLSEGQRIGIEKMLRTLMPWRKGPFELYGIQIDTEWRSDWKWQRILPHLSPLAGRTILDVGCGSGYHLWRMVGAGAHLAVGIDPMQLFLCQFEAVRKLLGGDSRAHLLPLGIEQLPALAAFDTVFSMGVLYHRRSPLDHLYQLKNQLVSGGELLLETLVIEGDEQQALIPGERYAQMRNVYFIPSAAMLIRWLEKCGFCDVRLVDQCPTSVEEQRRTDWMTSESLADFLDPADVRKTLEGYPAPLRAAFIARKP.

Carboxy-S-adenosyl-L-methionine is bound by residues Lys-91, Trp-105, Lys-110, Gly-130, 181 to 182 (IE), Met-196, Tyr-200, and Arg-315.

The protein belongs to the class I-like SAM-binding methyltransferase superfamily. CmoB family. Homotetramer.

The catalysed reaction is carboxy-S-adenosyl-L-methionine + 5-hydroxyuridine(34) in tRNA = 5-carboxymethoxyuridine(34) in tRNA + S-adenosyl-L-homocysteine + H(+). Functionally, catalyzes carboxymethyl transfer from carboxy-S-adenosyl-L-methionine (Cx-SAM) to 5-hydroxyuridine (ho5U) to form 5-carboxymethoxyuridine (cmo5U) at position 34 in tRNAs. In Edwardsiella ictaluri (strain 93-146), this protein is tRNA U34 carboxymethyltransferase.